Consider the following 335-residue polypeptide: N-acetyl-gamma-glutamyl-phosphate reductase (335 aa).

Cys156 is an active-site residue.

It belongs to the NAGSA dehydrogenase family. Type 1 subfamily.

It is found in the cytoplasm. It carries out the reaction N-acetyl-L-glutamate 5-semialdehyde + phosphate + NADP(+) = N-acetyl-L-glutamyl 5-phosphate + NADPH + H(+). Its pathway is amino-acid biosynthesis; L-arginine biosynthesis; N(2)-acetyl-L-ornithine from L-glutamate: step 3/4. In terms of biological role, catalyzes the NADPH-dependent reduction of N-acetyl-5-glutamyl phosphate to yield N-acetyl-L-glutamate 5-semialdehyde. In Aeromonas salmonicida (strain A449), this protein is N-acetyl-gamma-glutamyl-phosphate reductase.